We begin with the raw amino-acid sequence, 250 residues long: MRKPLMAGNWKMNKTVSEAVSFVKALKGAVTGVSNVEILVCPAFTVLYEVNNEIKGSNINLGAQNLFGEAKGAFTGEISTAMIRDTGCSYVIVGHSERRQYFGETDEAVNKKTKAALAADITPIVCVGETLKERENNVTFSVIEKQVRNGLADLTLQQASLTVIAYEPVWAIGTGKTATPDQAQEVHSFIRKIYAQMYEESAEKVRILYGGSVNPGNVSDLMKKSDIDGGLVGGASLEAESFTKLVKYSK.

9-11 contacts substrate; the sequence is NWK. His95 acts as the Electrophile in catalysis. The Proton acceptor role is filled by Glu167. Residues Gly173, Ser212, and 233 to 234 each bind substrate; that span reads GG.

The protein belongs to the triosephosphate isomerase family. As to quaternary structure, homodimer.

It localises to the cytoplasm. The enzyme catalyses D-glyceraldehyde 3-phosphate = dihydroxyacetone phosphate. It participates in carbohydrate biosynthesis; gluconeogenesis. It functions in the pathway carbohydrate degradation; glycolysis; D-glyceraldehyde 3-phosphate from glycerone phosphate: step 1/1. Its function is as follows. Involved in the gluconeogenesis. Catalyzes stereospecifically the conversion of dihydroxyacetone phosphate (DHAP) to D-glyceraldehyde-3-phosphate (G3P). The sequence is that of Triosephosphate isomerase from Endomicrobium trichonymphae.